Here is a 109-residue protein sequence, read N- to C-terminus: DNA-binding protein MJ0691 (109 aa).

This sequence belongs to the PDCD5 family.

The polypeptide is DNA-binding protein MJ0691 (Methanocaldococcus jannaschii (strain ATCC 43067 / DSM 2661 / JAL-1 / JCM 10045 / NBRC 100440) (Methanococcus jannaschii)).